The primary structure comprises 256 residues: Peptidyl-prolyl cis-trans isomerase FKBP19, chloroplastic (256 aa).

The transit peptide at 1–29 directs the protein to the chloroplast; it reads MASISSFGCFPQSTALAGTSSTTRCRTTV. A thylakoid-targeting transit peptide spans 30 to 88; the sequence is AARLADQSDDFAPLRSSGGNCGCVNNSGEFDRRKLLVSSVGLLIGALSYDSKDGDFASA. A PPIase FKBP-type domain is found at 135 to 254; that stretch reads GDKVVVDWDG…LFDVELLKIV (120 aa). Phosphoserine is present on Ser-164.

The protein belongs to the FKBP-type PPIase family.

It is found in the plastid. It localises to the chloroplast thylakoid lumen. The enzyme catalyses [protein]-peptidylproline (omega=180) = [protein]-peptidylproline (omega=0). In terms of biological role, PPIases accelerate the folding of proteins. It catalyzes the cis-trans isomerization of proline imidic peptide bonds in oligopeptides. The chain is Peptidyl-prolyl cis-trans isomerase FKBP19, chloroplastic (FKBP19) from Arabidopsis thaliana (Mouse-ear cress).